The chain runs to 351 residues: Anthranilate phosphoribosyltransferase (351 aa).

5-phospho-alpha-D-ribose 1-diphosphate contacts are provided by residues glycine 85, 88–89 (GD), serine 93, 95–98 (NIST), 113–121 (KHGNRAASS), and threonine 125. Residue glycine 85 participates in anthranilate binding. Serine 97 contributes to the Mg(2+) binding site. Asparagine 116 serves as a coordination point for anthranilate. An anthranilate-binding site is contributed by arginine 171. The Mg(2+) site is built by aspartate 229 and glutamate 230.

It belongs to the anthranilate phosphoribosyltransferase family. Homodimer. Mg(2+) serves as cofactor.

It carries out the reaction N-(5-phospho-beta-D-ribosyl)anthranilate + diphosphate = 5-phospho-alpha-D-ribose 1-diphosphate + anthranilate. Its pathway is amino-acid biosynthesis; L-tryptophan biosynthesis; L-tryptophan from chorismate: step 2/5. In terms of biological role, catalyzes the transfer of the phosphoribosyl group of 5-phosphorylribose-1-pyrophosphate (PRPP) to anthranilate to yield N-(5'-phosphoribosyl)-anthranilate (PRA). The chain is Anthranilate phosphoribosyltransferase from Saccharopolyspora erythraea (strain ATCC 11635 / DSM 40517 / JCM 4748 / NBRC 13426 / NCIMB 8594 / NRRL 2338).